Consider the following 652-residue polypeptide: MSSYVGVLVSDPWLQSQFTQVELRTLKSKFYSTKTRFGRVTVKHLPPVFAKLKYFNGKFDENEIKTILDESYPNRAKEVEFETFLRAFLSVQSRGSKGASSFLKTSTTTFHHSINESEKASYVSHINSYLKDEPNLKSYLPINPTTNALFDLVKDGVLLCKLINIAVPGTIDERAINTKKELNPWERTENLSLCLNSAKAIGCTVVNIGTQDIAEGTPHLVLGLIFQIIKIQLLADLNLKKTPQLVELVEENQDVEELMGLAPEKLLLKWMNFHLKKAGYEKQVTNFSSDVKDGEAYAYLLNALAPEHSTNVTLEIKDPSERATKVLEQAEKLDCKRFLSPKDIVEGSANLNLAFVAQLFHHRNGLSDESPKVPISVAEMVTEDEETSREERCFRHWMNSLGAVTYVDNVFEDVRNGWVLLEVLDKVSPGSVNWKHANKPPIKMPFKKVENCNQVIKIGKELNFSLVNVAGHDIMQGNKKLLLAFLWQLMRYTMLQILNNLRSHCQGKDITEADILNWANRKVKKSGRTSQAVSFKDKNLANGIFFLELLSAVEPRVVNWSLVSKGETQEEKNLNATYIISVARKLGCSIFLLPEDILEVNQRMMLILAASIMNWSLQQQSDTESTVSDDTDVSSVTEEISNLSTDDGSSDV.

Calponin-homology (CH) domains follow at residues 116-233 (ESEK…KIQL), 261-364 (LAPE…HHRN), 388-494 (SREE…RYTM), and 509-617 (DITE…NWSL). Actin-binding stretches follow at residues 116 to 364 (ESEK…HHRN) and 388 to 617 (SREE…NWSL). Positions 623–652 (TESTVSDDTDVSSVTEEISNLSTDDGSSDV) are disordered. Polar residues predominate over residues 640-652 (ISNLSTDDGSSDV).

As to quaternary structure, interacts with F-actin.

It localises to the cytoplasm. The protein resides in the cytoskeleton. In terms of biological role, cross-links actin filaments (F-actin). Stabilizes and prevents F-actin depolymerization mediated by profilin. May regulate actin cytoarchitecture, cell cycle, cell division, cell elongation and cytoplasmic tractus. In Arabidopsis thaliana (Mouse-ear cress), this protein is Fimbrin-4.